The sequence spans 177 residues: MSEMATIARPYAKAAFDFAVEKGELSQWAQMLTFCSEVAKNKDVAQLLDGAVASEQLAEIFISICGEQLNEFGQNLIHVMAENGRLKVLPGVLEQFILLQHEFEKVIDADVTSAIELTEQQKADIGAKLEARLERKVKLNCSVDETLLAGVIIRAGDLVIDNSARGRLGRLSETLQS.

This sequence belongs to the ATPase delta chain family. In terms of assembly, F-type ATPases have 2 components, F(1) - the catalytic core - and F(0) - the membrane proton channel. F(1) has five subunits: alpha(3), beta(3), gamma(1), delta(1), epsilon(1). F(0) has three main subunits: a(1), b(2) and c(10-14). The alpha and beta chains form an alternating ring which encloses part of the gamma chain. F(1) is attached to F(0) by a central stalk formed by the gamma and epsilon chains, while a peripheral stalk is formed by the delta and b chains.

It is found in the cell inner membrane. F(1)F(0) ATP synthase produces ATP from ADP in the presence of a proton or sodium gradient. F-type ATPases consist of two structural domains, F(1) containing the extramembraneous catalytic core and F(0) containing the membrane proton channel, linked together by a central stalk and a peripheral stalk. During catalysis, ATP synthesis in the catalytic domain of F(1) is coupled via a rotary mechanism of the central stalk subunits to proton translocation. Its function is as follows. This protein is part of the stalk that links CF(0) to CF(1). It either transmits conformational changes from CF(0) to CF(1) or is implicated in proton conduction. In Aliivibrio fischeri (strain MJ11) (Vibrio fischeri), this protein is ATP synthase subunit delta.